The following is a 115-amino-acid chain: Holo-[acyl-carrier-protein] synthase (115 aa).

Residues D8 and E50 each contribute to the Mg(2+) site.

The protein belongs to the P-Pant transferase superfamily. AcpS family. Mg(2+) is required as a cofactor.

The protein resides in the cytoplasm. The enzyme catalyses apo-[ACP] + CoA = holo-[ACP] + adenosine 3',5'-bisphosphate + H(+). Its function is as follows. Transfers the 4'-phosphopantetheine moiety from coenzyme A to a Ser of acyl-carrier-protein. This is Holo-[acyl-carrier-protein] synthase from Pseudarthrobacter chlorophenolicus (strain ATCC 700700 / DSM 12829 / CIP 107037 / JCM 12360 / KCTC 9906 / NCIMB 13794 / A6) (Arthrobacter chlorophenolicus).